Here is a 950-residue protein sequence, read N- to C-terminus: Bifunctional glutamine synthetase adenylyltransferase/adenylyl-removing enzyme (950 aa).

The interval 1–443 (MSLPSPLIPV…VFVTLIGDEE (443 aa)) is adenylyl removase. Residues 450-950 (ERHFNELWDM…WQEWLESSTI (501 aa)) are adenylyl transferase.

Belongs to the GlnE family. It depends on Mg(2+) as a cofactor.

The catalysed reaction is [glutamine synthetase]-O(4)-(5'-adenylyl)-L-tyrosine + phosphate = [glutamine synthetase]-L-tyrosine + ADP. It carries out the reaction [glutamine synthetase]-L-tyrosine + ATP = [glutamine synthetase]-O(4)-(5'-adenylyl)-L-tyrosine + diphosphate. Functionally, involved in the regulation of glutamine synthetase GlnA, a key enzyme in the process to assimilate ammonia. When cellular nitrogen levels are high, the C-terminal adenylyl transferase (AT) inactivates GlnA by covalent transfer of an adenylyl group from ATP to specific tyrosine residue of GlnA, thus reducing its activity. Conversely, when nitrogen levels are low, the N-terminal adenylyl removase (AR) activates GlnA by removing the adenylyl group by phosphorolysis, increasing its activity. The regulatory region of GlnE binds the signal transduction protein PII (GlnB) which indicates the nitrogen status of the cell. The protein is Bifunctional glutamine synthetase adenylyltransferase/adenylyl-removing enzyme of Vibrio vulnificus (strain CMCP6).